A 174-amino-acid chain; its full sequence is Adenine phosphoribosyltransferase (174 aa).

This sequence belongs to the purine/pyrimidine phosphoribosyltransferase family. In terms of assembly, homodimer.

The protein localises to the cytoplasm. The enzyme catalyses AMP + diphosphate = 5-phospho-alpha-D-ribose 1-diphosphate + adenine. It participates in purine metabolism; AMP biosynthesis via salvage pathway; AMP from adenine: step 1/1. Functionally, catalyzes a salvage reaction resulting in the formation of AMP, that is energically less costly than de novo synthesis. This Mycobacterium sp. (strain JLS) protein is Adenine phosphoribosyltransferase.